The chain runs to 321 residues: D-alanine--D-alanine ligase (321 aa).

Residues 121–315 enclose the ATP-grasp domain; the sequence is RSWFLTNNIN…FVNLIEEILK (195 aa). 148-199 is an ATP binding site; the sequence is IKRPYVIKPFTQGSSIGVEVIFEEDDFNFANYDFPYGDEVIIEKYIKGRELQ. Residues E268, E282, and N284 each coordinate Mg(2+).

Belongs to the D-alanine--D-alanine ligase family. Mg(2+) serves as cofactor. Mn(2+) is required as a cofactor.

The protein localises to the cytoplasm. The catalysed reaction is 2 D-alanine + ATP = D-alanyl-D-alanine + ADP + phosphate + H(+). It functions in the pathway cell wall biogenesis; peptidoglycan biosynthesis. Its function is as follows. Cell wall formation. The chain is D-alanine--D-alanine ligase from Rickettsia bellii (strain OSU 85-389).